The following is a 226-amino-acid chain: ATP-dependent dethiobiotin synthetase BioD (226 aa).

Residue 12–17 (GVGKTV) coordinates ATP. Mg(2+) is bound at residue Thr16. Lys37 is a catalytic residue. Thr41 serves as a coordination point for substrate. Residues Asp49, 108–111 (EGAG), 169–170 (GS), and 197–199 (PAG) each bind ATP. 2 residues coordinate Mg(2+): Asp49 and Glu108.

Belongs to the dethiobiotin synthetase family. Homodimer. It depends on Mg(2+) as a cofactor.

Its subcellular location is the cytoplasm. The catalysed reaction is (7R,8S)-7,8-diammoniononanoate + CO2 + ATP = (4R,5S)-dethiobiotin + ADP + phosphate + 3 H(+). It functions in the pathway cofactor biosynthesis; biotin biosynthesis; biotin from 7,8-diaminononanoate: step 1/2. In terms of biological role, catalyzes a mechanistically unusual reaction, the ATP-dependent insertion of CO2 between the N7 and N8 nitrogen atoms of 7,8-diaminopelargonic acid (DAPA, also called 7,8-diammoniononanoate) to form a ureido ring. The chain is ATP-dependent dethiobiotin synthetase BioD from Mycobacterium bovis (strain BCG / Pasteur 1173P2).